Reading from the N-terminus, the 341-residue chain is Dihydroorotate dehydrogenase (quinone) (341 aa).

Residues 59-63 (AGLDK) and Thr83 each bind FMN. Substrate is bound at residue Lys63. Position 108–112 (108–112 (NRMGF)) interacts with substrate. The FMN site is built by Asn136 and Asn169. Position 169 (Asn169) interacts with substrate. Ser172 (nucleophile) is an active-site residue. Position 174 (Asn174) interacts with substrate. FMN contacts are provided by Lys214 and Thr242. 243 to 244 (NT) contributes to the substrate binding site. Residues Gly265, Gly294, and 315–316 (YS) each bind FMN.

This sequence belongs to the dihydroorotate dehydrogenase family. Type 2 subfamily. Monomer. FMN serves as cofactor.

It localises to the cell membrane. It catalyses the reaction (S)-dihydroorotate + a quinone = orotate + a quinol. Its pathway is pyrimidine metabolism; UMP biosynthesis via de novo pathway; orotate from (S)-dihydroorotate (quinone route): step 1/1. Catalyzes the conversion of dihydroorotate to orotate with quinone as electron acceptor. The polypeptide is Dihydroorotate dehydrogenase (quinone) (Neisseria meningitidis serogroup C (strain 053442)).